The primary structure comprises 274 residues: Acetyl-coenzyme A carboxylase carboxyl transferase subunit alpha (274 aa).

A CoA carboxyltransferase C-terminal domain is found at 1-245; it reads MENSQELTPW…RENLKKAIEG (245 aa).

This sequence belongs to the AccA family. As to quaternary structure, acetyl-CoA carboxylase is a heterohexamer composed of biotin carboxyl carrier protein (AccB), biotin carboxylase (AccC) and two subunits each of ACCase subunit alpha (AccA) and ACCase subunit beta (AccD).

It localises to the cytoplasm. The catalysed reaction is N(6)-carboxybiotinyl-L-lysyl-[protein] + acetyl-CoA = N(6)-biotinyl-L-lysyl-[protein] + malonyl-CoA. It participates in lipid metabolism; malonyl-CoA biosynthesis; malonyl-CoA from acetyl-CoA: step 1/1. Component of the acetyl coenzyme A carboxylase (ACC) complex. First, biotin carboxylase catalyzes the carboxylation of biotin on its carrier protein (BCCP) and then the CO(2) group is transferred by the carboxyltransferase to acetyl-CoA to form malonyl-CoA. The polypeptide is Acetyl-coenzyme A carboxylase carboxyl transferase subunit alpha (Clostridium acetobutylicum (strain ATCC 824 / DSM 792 / JCM 1419 / IAM 19013 / LMG 5710 / NBRC 13948 / NRRL B-527 / VKM B-1787 / 2291 / W)).